A 251-amino-acid chain; its full sequence is Triosephosphate isomerase (251 aa).

Position 9–11 (9–11 (NWK)) interacts with substrate. The active-site Electrophile is H95. The Proton acceptor role is filled by E167. Substrate is bound by residues G173, S213, and 234-235 (GG). A Phosphoserine modification is found at S213.

It belongs to the triosephosphate isomerase family. As to quaternary structure, homodimer.

The protein resides in the cytoplasm. The catalysed reaction is D-glyceraldehyde 3-phosphate = dihydroxyacetone phosphate. The protein operates within carbohydrate biosynthesis; gluconeogenesis. Its pathway is carbohydrate degradation; glycolysis; D-glyceraldehyde 3-phosphate from glycerone phosphate: step 1/1. Involved in the gluconeogenesis. Catalyzes stereospecifically the conversion of dihydroxyacetone phosphate (DHAP) to D-glyceraldehyde-3-phosphate (G3P). In Shouchella clausii (strain KSM-K16) (Alkalihalobacillus clausii), this protein is Triosephosphate isomerase.